Here is a 186-residue protein sequence, read N- to C-terminus: Large ribosomal subunit protein uL22 (186 aa).

Belongs to the universal ribosomal protein uL22 family. Component of the large ribosomal subunit (LSU). Mature N.crassa ribosomes consist of a small (40S) and a large (60S) subunit. The 40S small subunit contains 1 molecule of ribosomal RNA (18S rRNA) and at least 32 different proteins. The large 60S subunit contains 3 rRNA molecules (26S, 5.8S and 5S rRNA) and at least 42 different proteins.

The protein localises to the cytoplasm. Component of the ribosome, a large ribonucleoprotein complex responsible for the synthesis of proteins in the cell. The small ribosomal subunit (SSU) binds messenger RNAs (mRNAs) and translates the encoded message by selecting cognate aminoacyl-transfer RNA (tRNA) molecules. The large subunit (LSU) contains the ribosomal catalytic site termed the peptidyl transferase center (PTC), which catalyzes the formation of peptide bonds, thereby polymerizing the amino acids delivered by tRNAs into a polypeptide chain. The nascent polypeptides leave the ribosome through a tunnel in the LSU and interact with protein factors that function in enzymatic processing, targeting, and the membrane insertion of nascent chains at the exit of the ribosomal tunnel. The polypeptide is Large ribosomal subunit protein uL22 (rpl-17) (Neurospora crassa (strain ATCC 24698 / 74-OR23-1A / CBS 708.71 / DSM 1257 / FGSC 987)).